The following is a 348-amino-acid chain: MKPIIFSLPRVINNESIPPPINKSKIYFDDNPSPKLIKYGFNNISEKMDLNILTSDSHYKAGLNIDFTRDDKNSFVSKTAEIFGNQYDPAFYQAWEILNIFDLINKSESIYTNIPETLLEVTNSHKKLFKTNKQYNITNDINKAINIQLIYSRYSDIDIDENALIQLIYNDLSSLFQMQIQGSNMILQLFNVQTQVTVQLIYLLSSYYTEAYLYKPESSSDLSDNKYLILIGLRNKSTIDLPKFPSNRYLLSLGVNDIPNNFTSVIQCMNSFVMPNKYETYLKIINYLNTKVYEGATYQDLIKEQNKFTLDWINIFTEPDKIKTILDDSINFVDKNCANSSKLDELFS.

The protein localises to the virion. This is an uncharacterized protein from Acanthamoeba polyphaga mimivirus (APMV).